The chain runs to 410 residues: Aspartate aminotransferase (410 aa).

3 residues coordinate L-aspartate: glycine 47, tryptophan 135, and asparagine 185. Lysine 249 is modified (N6-(pyridoxal phosphate)lysine). Arginine 385 serves as a coordination point for L-aspartate.

Belongs to the class-I pyridoxal-phosphate-dependent aminotransferase family. Homodimer. The cofactor is pyridoxal 5'-phosphate.

It localises to the cytoplasm. The enzyme catalyses L-aspartate + 2-oxoglutarate = oxaloacetate + L-glutamate. It carries out the reaction L-2-aminoadipate + 2-oxoglutarate = 2-oxoadipate + L-glutamate. Functionally, catalyzes the reversible conversion of aspartate and 2-oxoglutarate to glutamate and oxaloacetate. Genetic evidence shows that this protein is involved in L-lysine catabolism. It may have 2-aminoadipate:2-oxoglutarate aminotransferase activity. The protein is Aspartate aminotransferase (aatB) of Rhizobium meliloti (strain 1021) (Ensifer meliloti).